Consider the following 234-residue polypeptide: MERGGFHGYRKLSVNNTTPSPPGLAANFLMAEGSMRPPEFNQPNKTSNGGEEECTVREQDRFMPIANVIRIMRRILPAHAKISDDSKETIQECVSEYISFITGEANERCQREQRKTITAEDVLWAMSKLGFDDYIEPLTLYLHRYRELEGERGVSCSAGSVSMTNGLVVKRPNGTMTEYGAYGPVPGIHMAQYHYRHQNGFVFSGNEPNSKMSGSSSGASGARVEVFPTQQHKY.

Disordered stretches follow at residues 1–21 and 35–55; these read MERG…TPSP and MRPP…EECT. The DNA-binding element occupies 63–69; the sequence is MPIANVI. Positions 90 to 101 are subunit association domain (SAD); sequence IQECVSEYISFI. The segment at 206-234 is disordered; the sequence is NEPNSKMSGSSSGASGARVEVFPTQQHKY. Positions 213-222 are enriched in low complexity; the sequence is SGSSSGASGA.

Belongs to the NFYB/HAP3 subunit family. Heterotrimeric transcription factor composed of three components, NF-YA, NF-YB and NF-YC. NF-YB and NF-YC must interact and dimerize for NF-YA association and DNA binding. Interacts with PRN1. Binds directly with DPB3-1. Expressed in roots, flowers and developing siliques. Present in etiolated seedlings.

The protein localises to the nucleus. Component of the NF-Y/HAP transcription factor complex. The NF-Y complex stimulates the transcription of various genes by recognizing and binding to a CCAAT motif in promoters. Plays a role in the regulation of the embryogenesis. Involved in the abscisic acid (ABA) signaling pathway. The sequence is that of Nuclear transcription factor Y subunit B-6 from Arabidopsis thaliana (Mouse-ear cress).